The sequence spans 500 residues: Serine/threonine protein phosphatase 2A 57 kDa regulatory subunit B' kappa isoform (500 aa).

The tract at residues 1–53 (MFKQFLSKLPRKSSKSDSGELNRSSSGPVSSPVQRSGTSGGGSGPVRSNSGKR) is disordered. The segment covering 21–37 (LNRSSSGPVSSPVQRSG) has biased composition (polar residues).

This sequence belongs to the phosphatase 2A regulatory subunit B56 family. As to quaternary structure, PP2A consists of a common heteromeric enzyme, composed of a catalytic subunit (subunits C), a constant regulatory subunit (subunit A), and a variety of regulatory subunits such as subunits B (the R2/B/PR55/B55, R3/B''/PR72/PR130/PR59 and R5/B'/B56 families).

It localises to the cytoplasm. Functionally, the B regulatory subunit may modulate substrate selectivity and catalytic activity, and may also direct the localization of the catalytic enzyme to a particular subcellular compartment. The polypeptide is Serine/threonine protein phosphatase 2A 57 kDa regulatory subunit B' kappa isoform (B'KAPPA) (Arabidopsis thaliana (Mouse-ear cress)).